The chain runs to 269 residues: MSRLLTRFDELKQQNRAALVTFITAGDPDYATSLQILKGLPAAGADVIELGMPFTDPMADGPAIQLANIRALAAKQDLAKTLQMVREFRQDDQTTPIVLMGYFNPIHKMGVERFIAEAVEAGVDGLIVVDLPPEHNEDLCDPAQAAGIDFIRLTTPTTDDKRLPVVLNGSSGFVYYVSVAGVTGAGSATLEHVEEAVARLKRHTELPVCVGFGIRTPEQAAAIARLTEGVVVGSALIDQIANAKSNAQAVEGVLELCRQISTGVRSARA.

Residues E49 and D60 each act as proton acceptor in the active site.

This sequence belongs to the TrpA family. As to quaternary structure, tetramer of two alpha and two beta chains.

The catalysed reaction is (1S,2R)-1-C-(indol-3-yl)glycerol 3-phosphate + L-serine = D-glyceraldehyde 3-phosphate + L-tryptophan + H2O. It participates in amino-acid biosynthesis; L-tryptophan biosynthesis; L-tryptophan from chorismate: step 5/5. The alpha subunit is responsible for the aldol cleavage of indoleglycerol phosphate to indole and glyceraldehyde 3-phosphate. This is Tryptophan synthase alpha chain from Stutzerimonas stutzeri (strain A1501) (Pseudomonas stutzeri).